The primary structure comprises 293 residues: C-type lectin domain family 4 member G (293 aa).

At Met1–Pro31 the chain is on the cytoplasmic side. A Phosphoserine modification is found at Ser12. The chain crosses the membrane as a helical; Signal-anchor for type II membrane protein span at residues Leu32–Leu52. Over Leu53–Cys293 the chain is Extracellular. Asn73 carries N-linked (GlcNAc...) asparagine glycosylation. Positions Ser96–Glu136 form a coiled coil. Residue Asn159 is glycosylated (N-linked (GlcNAc...) asparagine). One can recognise a C-type lectin domain in the interval Phe172–Cys287. The cysteines at positions 264 and 278 are disulfide-linked.

In terms of assembly, (Microbial infection) Interacts with Japanese encephalitis virus envelope protein E. As to quaternary structure, (Microbial infection) Interacts with ebolavirus glycoprotein. (Microbial infection) Interacts with SARS-CoV spike glycoprotein. In terms of assembly, (Microbial infection) Interacts with lassa virus and Lymphocytic choriomeningitis virus glycoprotein. Expressed exclusively in fetal and adult liver and in lymph nodes. Specifically expressed by endothelial cells lining lymph node and liver sinuses (at protein level).

It is found in the cell membrane. Its function is as follows. Binds mannose, N-acetylglucosamine (GlcNAc) and fucose, but not galactose, in a Ca(2+)-dependent manner, in vitro. (Microbial infection) Acts as a receptor for Japanese encephalitis virus. In terms of biological role, (Microbial infection) Acts as a receptor for Ebolavirus. Functionally, (Microbial infection) Acts as a receptor for SARS-CoV. Its function is as follows. (Microbial infection) Acts as a receptor for Lassa virus and Lymphocytic choriomeningitis virus glycoprotein. The chain is C-type lectin domain family 4 member G (CLEC4G) from Homo sapiens (Human).